The primary structure comprises 340 residues: Flavonoid 7-O-methyltransferase 1 (340 aa).

S-adenosyl-L-methionine is bound at residue aspartate 207. The Proton acceptor role is filled by histidine 245.

The protein belongs to the class I-like SAM-binding methyltransferase superfamily. Cation-independent O-methyltransferase family. In terms of assembly, homodimer. Expressed in leaves.

The enzyme catalyses (2S)-naringenin + S-adenosyl-L-methionine = (2S)-sakuranetin + S-adenosyl-L-homocysteine + H(+). It catalyses the reaction scutellarein + S-adenosyl-L-methionine = scutellarein 7-methyl ether + S-adenosyl-L-homocysteine. It carries out the reaction apigenin + S-adenosyl-L-methionine = genkwanin + S-adenosyl-L-homocysteine + H(+). The catalysed reaction is luteolin + S-adenosyl-L-methionine = luteolin 7-methyl ether + S-adenosyl-L-homocysteine + H(+). The enzyme catalyses chrysoeriol + S-adenosyl-L-methionine = velutin + S-adenosyl-L-homocysteine. It catalyses the reaction diosmetin + S-adenosyl-L-methionine = luteolin 4',7-dimethyl ether + S-adenosyl-L-homocysteine. It carries out the reaction acacetin + S-adenosyl-L-methionine = apigenin 4',7-dimethyl ether + S-adenosyl-L-homocysteine. The catalysed reaction is scutellarein 4'-methyl ether + S-adenosyl-L-methionine = ladanein + S-adenosyl-L-homocysteine. The protein operates within flavonoid metabolism. In terms of biological role, flavonoid 7-O-methyltransferase involved in the biosynthesis of polymethoxylated flavonoids natural products such as nevadensin and salvigenin, aroma compounds which contribute to the flavor of sweet basil, and exhibit pharmacological activities such as anti-allergic, anti-oxidant, antibacterial, anti-proliferative, and anti-inflammatory effects. Catalyzes S-adenosylmethionine-dependent regioselective 7-O-methylation of flavonoids; active on various hydroxylated flavonoid substrates, including apigenin (API) and luteolin (LUT), and, with a lower efficiency, scutellarein (SCU), naringenin (NAR), chrysoeriol (CHRYS), diosmetin (DIOS), acacetin (ACA) and scutellarein-7-methyl ether (SCU7Me). The sequence is that of Flavonoid 7-O-methyltransferase 1 from Ocimum basilicum (Sweet basil).